A 101-amino-acid polypeptide reads, in one-letter code: Small ribosomal subunit protein bS18c (101 aa).

The protein belongs to the bacterial ribosomal protein bS18 family. As to quaternary structure, part of the 30S ribosomal subunit.

The protein resides in the plastid. It localises to the chloroplast. This is Small ribosomal subunit protein bS18c from Carica papaya (Papaya).